The chain runs to 274 residues: Large ribosomal subunit protein uL2 (274 aa).

A disordered region spans residues A224–Y256. The segment covering D229–V246 has biased composition (basic and acidic residues).

This sequence belongs to the universal ribosomal protein uL2 family. As to quaternary structure, part of the 50S ribosomal subunit. Forms a bridge to the 30S subunit in the 70S ribosome.

In terms of biological role, one of the primary rRNA binding proteins. Required for association of the 30S and 50S subunits to form the 70S ribosome, for tRNA binding and peptide bond formation. It has been suggested to have peptidyltransferase activity; this is somewhat controversial. Makes several contacts with the 16S rRNA in the 70S ribosome. The polypeptide is Large ribosomal subunit protein uL2 (Acidovorax sp. (strain JS42)).